A 362-amino-acid polypeptide reads, in one-letter code: MGGRYKIAVLPGDGIGTEIVQVGVAMLEAAARRFDFAFDFEEAPIGGAAIDATGEPLPAATLELCKASDAVFLGAVGGPQWDTLPSDKRPEKALLGLRAGLGLFANLRPARILPQLVAASALKPEVVEGVDILVVRELTGGLYFGIPKGIFPEKKGGRRGVNTMSYSAFEIERIGRVAFEAARERRGKLCSVDKANVLEVSQLWREVLVGLAPEYPDVELTHMYVDNCAMQLVRRPRQFDTIVTENMFGDILSDEAAMLTGSIGMLPSASLGSGGPGLYEPVHGSAPDIAGQDKANPLAQVLSGAMLLRHSLRQPEAAQAVERAVQTVLEQGYRTGDIAAPGAQIVGCRAMGEQLLAAFERA.

Position 78 to 91 (78 to 91 (GPQWDTLPSDKRPE)) interacts with NAD(+). Residues Arg98, Arg108, Arg136, and Asp226 each coordinate substrate. Positions 226, 250, and 254 each coordinate Mg(2+). 284–296 (GSAPDIAGQDKAN) contributes to the NAD(+) binding site.

The protein belongs to the isocitrate and isopropylmalate dehydrogenases family. LeuB type 1 subfamily. Homodimer. Requires Mg(2+) as cofactor. The cofactor is Mn(2+).

It localises to the cytoplasm. It catalyses the reaction (2R,3S)-3-isopropylmalate + NAD(+) = 4-methyl-2-oxopentanoate + CO2 + NADH. Its pathway is amino-acid biosynthesis; L-leucine biosynthesis; L-leucine from 3-methyl-2-oxobutanoate: step 3/4. Its function is as follows. Catalyzes the oxidation of 3-carboxy-2-hydroxy-4-methylpentanoate (3-isopropylmalate) to 3-carboxy-4-methyl-2-oxopentanoate. The product decarboxylates to 4-methyl-2 oxopentanoate. The protein is 3-isopropylmalate dehydrogenase of Gloeobacter violaceus (strain ATCC 29082 / PCC 7421).